The chain runs to 352 residues: DNA polymerase IV (352 aa).

Residues 6 to 187 enclose the UmuC domain; the sequence is IIHIDADCFY…VPVKFISGIG (182 aa). The Mg(2+) site is built by aspartate 10 and aspartate 105. The active site involves glutamate 106.

Belongs to the DNA polymerase type-Y family. In terms of assembly, monomer. Mg(2+) is required as a cofactor.

Its subcellular location is the cytoplasm. It carries out the reaction DNA(n) + a 2'-deoxyribonucleoside 5'-triphosphate = DNA(n+1) + diphosphate. In terms of biological role, poorly processive, error-prone DNA polymerase involved in untargeted mutagenesis. Copies undamaged DNA at stalled replication forks, which arise in vivo from mismatched or misaligned primer ends. These misaligned primers can be extended by PolIV. Exhibits no 3'-5' exonuclease (proofreading) activity. May be involved in translesional synthesis, in conjunction with the beta clamp from PolIII. The sequence is that of DNA polymerase IV from Marinomonas sp. (strain MWYL1).